The following is a 598-amino-acid chain: UvrABC system protein C (598 aa).

Residues 14 to 91 form the GIY-YIG domain; the sequence is DSPGCYLHKD…IQKNMPKYNI (78 aa). The region spanning 196–231 is the UVR domain; the sequence is DKIIEDLRSKMLAASEEMAFERAAEYRDLISGIATM.

It belongs to the UvrC family. Interacts with UvrB in an incision complex.

It is found in the cytoplasm. Functionally, the UvrABC repair system catalyzes the recognition and processing of DNA lesions. UvrC both incises the 5' and 3' sides of the lesion. The N-terminal half is responsible for the 3' incision and the C-terminal half is responsible for the 5' incision. This Streptococcus pyogenes serotype M12 (strain MGAS2096) protein is UvrABC system protein C.